The sequence spans 579 residues: Probable zinc metalloprotease EGY1, chloroplastic (579 aa).

Disordered regions lie at residues 1–42 and 78–146; these read MAAA…PASA and GGGG…NEPP. The transit peptide at 1–44 directs the protein to the chloroplast; it reads MAAAAAALASSPMVHLTASRLRLPRPARSPAAATPSPSPASAAC. Positions 16-42 are enriched in low complexity; the sequence is LTASRLRLPRPARSPAAATPSPSPASA. The segment covering 78-92 has biased composition (gly residues); sequence GGGGGGGGGGGGTGG. 2 stretches are compositionally biased toward low complexity: residues 104-115 and 125-137; these read AAAAEAKVGGAV and SGSF…SSSG. Helical transmembrane passes span 272 to 292, 321 to 341, 357 to 377, 392 to 412, 419 to 439, 452 to 472, 505 to 525, and 547 to 567; these read YVIS…LGIA, LLPF…IQLF, LSIP…ITQF, MAGP…GLLL, ASDL…LGLV, ATVA…TTAF, LLGL…YVLI, and AALI…WDEL.

It belongs to the peptidase M50B family.

The protein localises to the plastid. It localises to the chloroplast membrane. Functionally, probable membrane-associated metalloprotease that may be involved in chloroplast development. This chain is Probable zinc metalloprotease EGY1, chloroplastic (EGY1), found in Oryza sativa subsp. japonica (Rice).